The sequence spans 229 residues: 2,3-bisphosphoglycerate-dependent phosphoglycerate mutase (229 aa).

Residues 8 to 15 (RHGKSEWN), 21 to 22 (TG), Arg60, 87 to 90 (ERHY), Lys98, 114 to 115 (RR), and 183 to 184 (GN) each bind substrate. Catalysis depends on His9, which acts as the Tele-phosphohistidine intermediate. The active-site Proton donor/acceptor is the Glu87.

The protein belongs to the phosphoglycerate mutase family. BPG-dependent PGAM subfamily. Homodimer.

The enzyme catalyses (2R)-2-phosphoglycerate = (2R)-3-phosphoglycerate. The protein operates within carbohydrate degradation; glycolysis; pyruvate from D-glyceraldehyde 3-phosphate: step 3/5. Its function is as follows. Catalyzes the interconversion of 2-phosphoglycerate and 3-phosphoglycerate. The protein is 2,3-bisphosphoglycerate-dependent phosphoglycerate mutase of Nautilia profundicola (strain ATCC BAA-1463 / DSM 18972 / AmH).